A 97-amino-acid polypeptide reads, in one-letter code: Large ribosomal subunit protein eL21 (97 aa).

A disordered region spans residues 1 to 26; that stretch reads MQKSEGFRSKTRYKLQKHPRQKGMAP. Residues 9-21 are compositionally biased toward basic residues; it reads SKTRYKLQKHPRQ.

It belongs to the eukaryotic ribosomal protein eL21 family.

The protein is Large ribosomal subunit protein eL21 of Methanococcus maripaludis (strain C6 / ATCC BAA-1332).